The sequence spans 515 residues: Maturase K (515 aa).

Belongs to the intron maturase 2 family. MatK subfamily.

The protein resides in the plastid. It localises to the chloroplast. Usually encoded in the trnK tRNA gene intron. Probably assists in splicing its own and other chloroplast group II introns. The protein is Maturase K of Cedrus deodara (Deodar cedar).